The sequence spans 49 residues: Glycolactin (49 aa).

The protein belongs to the pancreatic ribonuclease family. In terms of processing, glycosylated. As to expression, milk.

It is found in the secreted. In terms of biological role, manifests poly C-specific RNase activity toward yeast tRNA, elicits a dose-dependent inhibition of cell-free translation, inhibits formation of superoxide ions in vitro and inhibits the hemagglutinating activities of soybean lectin and Ricinus communis agglutinin 120. Inhibits HIV-1 reverse transcriptase. This is Glycolactin from Bos taurus (Bovine).